Consider the following 562-residue polypeptide: F-box only protein 33 (562 aa).

The F-box domain occupies 68-114; sequence AAGAASLPSELIVHIFSFLPAPDRLRASASCSHWRECLFYPALWPQL. The span at 155-173 shows a compositional bias: gly residues; it reads GGGPGDGGSGGGTDTGTGG. A disordered region spans residues 155-176; sequence GGGPGDGGSGGGTDTGTGGEDG.

Part of the SCF (SKP1-CUL1-F-box) E3 ubiquitin-protein ligase complex SCF(FBXO33) formed of CUL1, SKP1, RBX1 and FBXO33. Interacts via its N-terminus with YBX1 CSD domain. Directly interacts with SKP1 and CUL1.

It participates in protein modification; protein ubiquitination. Functionally, substrate recognition component of a SCF (SKP1-CUL1-F-box protein) E3 ubiquitin-protein ligase complex which mediates the ubiquitination and subsequent proteasomal degradation of target proteins. Probably recognizes and binds to phosphorylated target proteins. Recognizes YBX1. This Mus musculus (Mouse) protein is F-box only protein 33 (Fbxo33).